The chain runs to 470 residues: Pre-mycofactocin glycosyltransferase (470 aa).

The helical transmembrane segment at 315–335 threads the bilayer; sequence LVISGGALMAWILMSIGTGLG.

This sequence belongs to the glycosyltransferase 2 family.

The protein localises to the cell membrane. Functionally, involved in the biosynthesis of the enzyme cofactor mycofactocin (MFT). Acts as a glycosyltransferase that catalyzes the oligoglycosylation of pre-mycofactocin (PMFT), adding up to nine beta-1,4-linked glucose residues. Is required for the in vivo ethanol assimilation in M.smegmatis. This chain is Pre-mycofactocin glycosyltransferase (mftF), found in Mycobacterium tuberculosis (strain CDC 1551 / Oshkosh).